A 98-amino-acid polypeptide reads, in one-letter code: Exopolysaccharide production repressor protein (98 aa).

The next 2 helical transmembrane spans lie at 6–26 (VFLS…YLNG) and 35–55 (TLIC…FLVW). The tract at residues 73–98 (AEAANDEKQPGKVSLRRLNRPHHLNS) is disordered. A compositionally biased stretch (basic residues) spans 86-98 (SLRRLNRPHHLNS).

It is found in the cell membrane. It functions in the pathway glycan metabolism; exopolysaccharide biosynthesis. Its function is as follows. Inhibition of exopolysaccharide synthesis (EPS) and nodulation ability (NOD). The chain is Exopolysaccharide production repressor protein (exoX) from Rhizobium meliloti (strain 1021) (Ensifer meliloti).